The sequence spans 404 residues: Floricaula/leafy-like protein FL1 (404 aa).

The interval 210-251 (IGVPEHSSESDERKADTNKQKRRRSKEPGEDGEDRPREHPFI) is disordered. Basic and acidic residues-rich tracts occupy residues 215–228 (HSSESDERKADTNK) and 235–249 (KEPGEDGEDRPREHP). DNA-binding regions lie at residues 246–250 (REHPF), 315–322 (NKPKMRHY), and 386–389 (YVPT).

The protein belongs to the FLO/LFY family. In terms of tissue distribution, expressed in both male and female cones, vegetative buds and needles, but not in the roots.

It is found in the nucleus. In terms of biological role, probable transcription factor. This is Floricaula/leafy-like protein FL1 from Pinus radiata (Monterey pine).